A 968-amino-acid polypeptide reads, in one-letter code: Alanine--tRNA ligase, cytoplasmic (968 aa).

At Met-1 the chain carries N-acetylmethionine. Ser-3 carries the phosphoserine modification. Lys-19 is modified (N6-acetyllysine). Residues Arg-77, His-95, Trp-176, and 214-216 (IWN) contribute to the ATP site. 2 residues coordinate L-alanine: Asn-216 and Asp-239. Residue Gly-243 participates in ATP binding. Residues Ser-399 and Ser-555 each carry the phosphoserine modification. Zn(2+) contacts are provided by His-605, His-609, Cys-723, and His-727. The Nuclear localization signal motif lies at 750–763 (RRIVAVTGAEAQKA). Lys-876 is modified (N6-acetyllysine). Residue Lys-943 is modified to N6,N6,N6-trimethyllysine; alternate. Lys-943 is subject to N6,N6-dimethyllysine; alternate. Residue Lys-943 is modified to N6-methyllysine; alternate.

The protein belongs to the class-II aminoacyl-tRNA synthetase family. Monomer. Interacts with ANKRD16; the interaction is direct. Zn(2+) serves as cofactor. ISGylated. In terms of processing, methylation at 'Lys-943' by METTL21C.

The protein resides in the cytoplasm. Its subcellular location is the nucleus. The enzyme catalyses tRNA(Ala) + L-alanine + ATP = L-alanyl-tRNA(Ala) + AMP + diphosphate. The catalysed reaction is (S)-lactate + ATP + H(+) = (S)-lactoyl-AMP + diphosphate. It carries out the reaction (S)-lactoyl-AMP + L-lysyl-[protein] = N(6)-[(S)-lactoyl]-L-lysyl-[protein] + AMP + 2 H(+). With respect to regulation, the protein lactyltransferase activity is inhibited by beta-alanine. Functionally, catalyzes the attachment of alanine to tRNA(Ala) in a two-step reaction: alanine is first activated by ATP to form Ala-AMP and then transferred to the acceptor end of tRNA(Ala). Also edits incorrectly charged tRNA(Ala) via its editing domain. In presence of high levels of lactate, also acts as a protein lactyltransferase that mediates lactylation of lysine residues in target proteins, such as TEAD1, TP53/p53 and YAP1. Protein lactylation takes place in a two-step reaction: lactate is first activated by ATP to form lactate-AMP and then transferred to lysine residues of target proteins. Acts as an inhibitor of TP53/p53 activity by catalyzing lactylation of TP53/p53. Acts as a positive regulator of the Hippo pathway by mediating lactylation of TEAD1 and YAP1. The chain is Alanine--tRNA ligase, cytoplasmic (Aars1) from Rattus norvegicus (Rat).